The chain runs to 482 residues: UDP-N-acetylmuramate--L-alanine ligase (482 aa).

123–129 contacts ATP; sequence GTHGKTT.

The protein belongs to the MurCDEF family.

The protein resides in the cytoplasm. The catalysed reaction is UDP-N-acetyl-alpha-D-muramate + L-alanine + ATP = UDP-N-acetyl-alpha-D-muramoyl-L-alanine + ADP + phosphate + H(+). Its pathway is cell wall biogenesis; peptidoglycan biosynthesis. In terms of biological role, cell wall formation. This Pseudomonas putida (strain ATCC 47054 / DSM 6125 / CFBP 8728 / NCIMB 11950 / KT2440) protein is UDP-N-acetylmuramate--L-alanine ligase.